The sequence spans 335 residues: Nuclear distribution protein nudE homolog 1 (335 aa).

Positions 1-93 (MEDSGKTFSS…VQHSEGYRQI (93 aa)) are self-association. Residues 18-188 (WKDLAMTYKQ…ELAVQQKQEK (171 aa)) are a coiled coil. An interaction with PAFAH1B1 region spans residues 88–156 (EGYRQISALE…ERNAFLESEL (69 aa)). An interaction with CENPF region spans residues 167–290 (QRLKDEARDL…QSPNRTGGPA (124 aa)). The tract at residues 181 to 246 (AVQQKQEKPR…DDSTGGTPLT (66 aa)) is disordered. A compositionally biased stretch (polar residues) spans 204–214 (TAVQATGSVPS). A Phosphoserine modification is found at Ser211. A phosphothreonine mark is found at Thr215 and Thr228. 2 positions are modified to phosphoserine: Ser231 and Ser239. Phosphothreonine occurs at positions 243 and 246. Cys274 carries S-palmitoyl cysteine; by ZDHHC2, ZDHHC3 and ZDHHC7 lipidation. The disordered stretch occupies residues 279-335 (YDQSPNRTGGPASGRSSKNRDGGERRPSSTSVPLGDKGLDTSCRWLSKSTTRSSSSC). Ser282 is modified (phosphoserine). Basic and acidic residues predominate over residues 296 to 305 (KNRDGGERRP). At Ser309 the chain carries Phosphoserine. The span at 325 to 335 (SKSTTRSSSSC) shows a compositional bias: low complexity.

This sequence belongs to the nudE family. Homodimer. Interacts with CNTRL, LIS1, dynein, SLMAP and TCP1. Interacts with CENPF, dynactin, tubulin gamma, PAFAH1B1, PCM1 and PCNT. Interacts with ZNF365. Interacts with GTP-bound RAB9A and RAB9B; the interaction leads to RAB9-dynein motor tethering. Interacts (via C-terminus) with MCRS1 (via C-terminus); phosphorylation of NDE1 inhibits the interaction. Phosphorylated in mitosis. Phosphorylated in vitro by CDC2. Phosphorylation at Thr-246 is essential for the G2/M transition. Expressed in the neuroepithelium throughout the developing brain, including the cerebral cortex and cerebellum.

The protein resides in the cytoplasm. It localises to the cytoskeleton. The protein localises to the microtubule organizing center. It is found in the centrosome. Its subcellular location is the chromosome. The protein resides in the centromere. It localises to the kinetochore. The protein localises to the spindle. It is found in the cleavage furrow. Its subcellular location is the cytoplasmic vesicle membrane. Functionally, required for centrosome duplication and formation and function of the mitotic spindle. Essential for the development of the cerebral cortex. May regulate the production of neurons by controlling the orientation of the mitotic spindle during division of cortical neuronal progenitors of the proliferative ventricular zone of the brain. Orientation of the division plane perpendicular to the layers of the cortex gives rise to two proliferative neuronal progenitors whereas parallel orientation of the division plane yields one proliferative neuronal progenitor and a postmitotic neuron. A premature shift towards a neuronal fate within the progenitor population may result in an overall reduction in the final number of neurons and an increase in the number of neurons in the deeper layers of the cortex. Acts as a RAB9A/B effector that tethers RAB9-associated late endosomes to the dynein motor for their retrograde transport to the trans-Golgi network. This Homo sapiens (Human) protein is Nuclear distribution protein nudE homolog 1.